We begin with the raw amino-acid sequence, 375 residues long: Alcohol dehydrogenase 1 (375 aa).

Ser-2 is subject to N-acetylserine. Cys-47, His-68, Cys-98, Cys-101, Cys-104, Cys-112, and Cys-175 together coordinate Zn(2+). NAD(+) contacts are provided by residues 200 to 205, Asp-224, and Lys-229; that span reads GLGGVG. Lys-234 carries the N6-succinyllysine modification. 293–295 contacts NAD(+); sequence VGV. Lys-340 bears the N6-succinyllysine mark. Arg-370 is an NAD(+) binding site.

Belongs to the zinc-containing alcohol dehydrogenase family. As to quaternary structure, homodimer. Zn(2+) is required as a cofactor.

The protein localises to the cytoplasm. It catalyses the reaction a primary alcohol + NAD(+) = an aldehyde + NADH + H(+). The catalysed reaction is a secondary alcohol + NAD(+) = a ketone + NADH + H(+). This chain is Alcohol dehydrogenase 1 (ADH1), found in Oryctolagus cuniculus (Rabbit).